A 459-amino-acid chain; its full sequence is UDP-N-acetylmuramoylalanine--D-glutamate ligase (459 aa).

Position 131 to 137 (131 to 137 (GANGKST)) interacts with ATP.

Belongs to the MurCDEF family.

It is found in the cytoplasm. The enzyme catalyses UDP-N-acetyl-alpha-D-muramoyl-L-alanine + D-glutamate + ATP = UDP-N-acetyl-alpha-D-muramoyl-L-alanyl-D-glutamate + ADP + phosphate + H(+). Its pathway is cell wall biogenesis; peptidoglycan biosynthesis. Functionally, cell wall formation. Catalyzes the addition of glutamate to the nucleotide precursor UDP-N-acetylmuramoyl-L-alanine (UMA). The polypeptide is UDP-N-acetylmuramoylalanine--D-glutamate ligase (Methylococcus capsulatus (strain ATCC 33009 / NCIMB 11132 / Bath)).